The sequence spans 288 residues: Acetyl-coenzyme A carboxylase carboxyl transferase subunit beta (288 aa).

In terms of domain architecture, CoA carboxyltransferase N-terminal spans 34-288 (LFAKCPACKH…HLVAFHGGVS (255 aa)). The Zn(2+) site is built by Cys38, Cys41, Cys56, and Cys59. A C4-type zinc finger spans residues 38–59 (CPACKHMIYQKDLGPAKICPTC).

It belongs to the AccD/PCCB family. In terms of assembly, acetyl-CoA carboxylase is a heterohexamer composed of biotin carboxyl carrier protein (AccB), biotin carboxylase (AccC) and two subunits each of ACCase subunit alpha (AccA) and ACCase subunit beta (AccD). Zn(2+) is required as a cofactor.

The protein localises to the cytoplasm. The catalysed reaction is N(6)-carboxybiotinyl-L-lysyl-[protein] + acetyl-CoA = N(6)-biotinyl-L-lysyl-[protein] + malonyl-CoA. It participates in lipid metabolism; malonyl-CoA biosynthesis; malonyl-CoA from acetyl-CoA: step 1/1. Its function is as follows. Component of the acetyl coenzyme A carboxylase (ACC) complex. Biotin carboxylase (BC) catalyzes the carboxylation of biotin on its carrier protein (BCCP) and then the CO(2) group is transferred by the transcarboxylase to acetyl-CoA to form malonyl-CoA. This chain is Acetyl-coenzyme A carboxylase carboxyl transferase subunit beta, found in Streptococcus equi subsp. equi (strain 4047).